The chain runs to 178 residues: Alkyl hydroperoxide reductase AhpD (178 aa).

The active-site Proton donor is the C130. A disulfide bond links C130 and C133. C133 serves as the catalytic Cysteine sulfenic acid (-SOH) intermediate.

Belongs to the AhpD family. As to quaternary structure, homotrimer.

It catalyses the reaction N(6)-[(R)-dihydrolipoyl]-L-lysyl-[lipoyl-carrier protein] + a hydroperoxide = N(6)-[(R)-lipoyl]-L-lysyl-[lipoyl-carrier protein] + an alcohol + H2O. Functionally, antioxidant protein with alkyl hydroperoxidase activity. Required for the reduction of the AhpC active site cysteine residues and for the regeneration of the AhpC enzyme activity. This is Alkyl hydroperoxide reductase AhpD from Mycobacterium ulcerans (strain Agy99).